Reading from the N-terminus, the 527-residue chain is Estrogen receptor beta (527 aa).

The modulating stretch occupies residues 1 to 145 (MDVKNSPSSL…SPSSKRDAHF (145 aa)). Serine 84 and serine 102 each carry phosphoserine; by MAPK. NR C4-type zinc fingers lie at residues 146 to 166 (CAVC…CEGC) and 182 to 206 (CPAT…LRKC). A DNA-binding region (nuclear receptor) is located at residues 146-211 (CAVCSDYASG…RLRKCYEVGM (66 aa)). Residues 261–495 (SPEQLVLTLL…DLLLEMLNAH (235 aa)) form the NR LBD domain.

Belongs to the nuclear hormone receptor family. NR3 subfamily. Binds DNA as a homodimer. Can form a heterodimer with ESR1. Interacts with NCOA1, NCOA3, NCOA5 and NCOA6 coactivators, leading to a strong increase of transcription of target genes. Interacts with UBE1C and AKAP13. Interacts with DNTTIP2. Interacts with CCDC62 in the presence of estradiol/E2; this interaction seems to enhance the transcription of target genes. Interacts with DNAAF4. Interacts with PRMT2. Interacts with CCAR2 (via N-terminus) in a ligand-independent manner. Interacts with RBM39, in the presence of estradiol (E2). Interacts with STUB1/CHIP. Phosphorylation at Ser-84 and Ser-102 recruits NCOA1. Present in granulosa cells of antral follicles in various stages of follicular growth.

Its subcellular location is the nucleus. In terms of biological role, nuclear hormone receptor. Binds estrogens with an affinity similar to that of ESR1ESR1/ER-alpha, and activates expression of reporter genes containing estrogen response elements (ERE) in an estrogen-dependent manner. This Bos taurus (Bovine) protein is Estrogen receptor beta (ESR2).